The following is a 116-amino-acid chain: Small ribosomal subunit protein bS6 (116 aa).

The tract at residues 94-116 is disordered; sequence ESITEPSPLTKPKEDRKGDSEAA. The span at 104–116 shows a compositional bias: basic and acidic residues; that stretch reads KPKEDRKGDSEAA.

This sequence belongs to the bacterial ribosomal protein bS6 family.

Its function is as follows. Binds together with bS18 to 16S ribosomal RNA. The chain is Small ribosomal subunit protein bS6 from Idiomarina loihiensis (strain ATCC BAA-735 / DSM 15497 / L2-TR).